The primary structure comprises 279 residues: Pantothenate synthetase (279 aa).

An ATP-binding site is contributed by 26 to 33; the sequence is MGNLHEGH. Residue His-33 is the Proton donor of the active site. (R)-pantoate is bound at residue Gln-57. Gln-57 contributes to the beta-alanine binding site. 144–147 contributes to the ATP binding site; that stretch reads GKKD. Residue Gln-150 participates in (R)-pantoate binding. ATP is bound by residues Val-173 and 181–184; that span reads LSSR.

Belongs to the pantothenate synthetase family. In terms of assembly, homodimer.

The protein localises to the cytoplasm. It carries out the reaction (R)-pantoate + beta-alanine + ATP = (R)-pantothenate + AMP + diphosphate + H(+). It participates in cofactor biosynthesis; (R)-pantothenate biosynthesis; (R)-pantothenate from (R)-pantoate and beta-alanine: step 1/1. Its function is as follows. Catalyzes the condensation of pantoate with beta-alanine in an ATP-dependent reaction via a pantoyl-adenylate intermediate. The sequence is that of Pantothenate synthetase from Burkholderia ambifaria (strain ATCC BAA-244 / DSM 16087 / CCUG 44356 / LMG 19182 / AMMD) (Burkholderia cepacia (strain AMMD)).